Here is a 345-residue protein sequence, read N- to C-terminus: Anthranilate phosphoribosyltransferase (345 aa).

5-phospho-alpha-D-ribose 1-diphosphate is bound by residues Gly-86, 89-90, Thr-94, 96-99, 114-122, and Ser-126; these read GD, NIST, and KHGGRGVSS. Gly-86 contributes to the anthranilate binding site. Ser-98 provides a ligand contact to Mg(2+). Residue Arg-172 coordinates anthranilate. Asp-231 and Glu-232 together coordinate Mg(2+).

Belongs to the anthranilate phosphoribosyltransferase family. Homodimer. The cofactor is Mg(2+).

The catalysed reaction is N-(5-phospho-beta-D-ribosyl)anthranilate + diphosphate = 5-phospho-alpha-D-ribose 1-diphosphate + anthranilate. The protein operates within amino-acid biosynthesis; L-tryptophan biosynthesis; L-tryptophan from chorismate: step 2/5. Its function is as follows. Catalyzes the transfer of the phosphoribosyl group of 5-phosphorylribose-1-pyrophosphate (PRPP) to anthranilate to yield N-(5'-phosphoribosyl)-anthranilate (PRA). This is Anthranilate phosphoribosyltransferase from Ralstonia pickettii (strain 12J).